The chain runs to 185 residues: Large ribosomal subunit protein bL25 (185 aa).

Belongs to the bacterial ribosomal protein bL25 family. CTC subfamily. As to quaternary structure, part of the 50S ribosomal subunit; part of the 5S rRNA/L5/L18/L25 subcomplex. Contacts the 5S rRNA. Binds to the 5S rRNA independently of L5 and L18.

Its function is as follows. This is one of the proteins that binds to the 5S RNA in the ribosome where it forms part of the central protuberance. The chain is Large ribosomal subunit protein bL25 from Chlamydia trachomatis serovar L2 (strain ATCC VR-902B / DSM 19102 / 434/Bu).